Consider the following 502-residue polypeptide: ATP synthase subunit alpha (502 aa).

Residue 169-176 coordinates ATP; sequence GDRQTGKT.

Belongs to the ATPase alpha/beta chains family. In terms of assembly, F-type ATPases have 2 components, CF(1) - the catalytic core - and CF(0) - the membrane proton channel. CF(1) has five subunits: alpha(3), beta(3), gamma(1), delta(1), epsilon(1). CF(0) has three main subunits: a(1), b(2) and c(9-12). The alpha and beta chains form an alternating ring which encloses part of the gamma chain. CF(1) is attached to CF(0) by a central stalk formed by the gamma and epsilon chains, while a peripheral stalk is formed by the delta and b chains.

It localises to the cell membrane. It carries out the reaction ATP + H2O + 4 H(+)(in) = ADP + phosphate + 5 H(+)(out). In terms of biological role, produces ATP from ADP in the presence of a proton gradient across the membrane. The alpha chain is a regulatory subunit. This Bacillus velezensis (strain DSM 23117 / BGSC 10A6 / LMG 26770 / FZB42) (Bacillus amyloliquefaciens subsp. plantarum) protein is ATP synthase subunit alpha.